A 971-amino-acid polypeptide reads, in one-letter code: GEM-interacting protein (971 aa).

Serine 19 is modified (phosphoserine). 3 disordered regions span residues 41-79 (AGDPVRREDLEPDKADTATVVTEENSEASSWRDLSPEGP), 231-267 (LRARSQGSPEDPPSQASPGSNKQQERRRRSREEAQAK), and 383-476 (DTKK…IENG). A compositionally biased stretch (basic and acidic residues) spans 44-56 (PVRREDLEPDKAD). The segment covering 59-69 (TVVTEENSEAS) has biased composition (polar residues). Serine 75, serine 235, serine 238, serine 247, serine 436, and serine 440 each carry phosphoserine. The F-BAR domain maps to 85–348 (EELDLRLIRT…CCVPFEPGQR (264 aa)). The segment covering 458–471 (SSDDFEERDPDLGD) has biased composition (acidic residues). The Phorbol-ester/DAG-type zinc-finger motif lies at 492-536 (THRLRRLRGPAKCRECEAFMVSGTECEECFLTCHKRCLETLLILC). The Rho-GAP domain occupies 553 to 756 (LQLPRDFPEE…FLIVHYEQIF (204 aa)). At threonine 659 the chain carries Phosphothreonine. The disordered stretch occupies residues 799-865 (IALDSSPDPK…LGAQSRGHFS (67 aa)). Residues 805 to 817 (PDPKHHSALEKCP) are compositionally biased toward basic and acidic residues. Phosphoserine occurs at positions 884, 908, and 924.

Interacts with GEM through its N-terminal.

Functionally, stimulates, in vitro and in vivo, the GTPase activity of RhoA. The sequence is that of GEM-interacting protein (Gmip) from Mus musculus (Mouse).